The following is a 275-amino-acid chain: MLGSFVKLNNGLKCPQFAYGSYMVNRTKCFDSVYAALQCGYRHIDSAQMYHNEADCGRAILKFMEETGTKREDIWFTSKLNDLSGYKSTLSSIDASVKACGLGYIDLFLLHSPYGDRIESWKALEKGVEEGKLRAIGVSNFGPHHIQELLDSHPKIIPCVNQIELHPFCSQQKVVDYCESKGIQLAAYAPLVHGEKFGNKQLLAIASKYNKSEAQIMIRYCLQRGFIVLPKSSTPRRIKENGDVFDFEISKEDMEKLYNLDEDYHSDWNPCVSPL.

Residue D45 coordinates NADPH. Active-site proton donor residues include Y50 and H111. 7 residues coordinate NADPH: S139, Q162, L191, K196, S232, S233, and R237.

It belongs to the aldo/keto reductase family.

The protein localises to the cytoplasm. It is found in the nucleus. This is an uncharacterized protein from Schizosaccharomyces pombe (strain 972 / ATCC 24843) (Fission yeast).